The sequence spans 791 residues: DUF1769 family protein duc1 (791 aa).

Residues 158 to 189 form a disordered region; that stretch reads ADSQESDTESLPEINDSSDVSLSDLPSTNVTP. A compositionally biased stretch (low complexity) spans 174 to 184; sequence SSDVSLSDLPS. The short motif at 373-379 is the FFAT element; it reads RYFTALE. Phosphotyrosine is present on tyrosine 374. Threonine 376 is modified (phosphothreonine). Disordered stretches follow at residues 381–505, 542–606, and 630–658; these read QQDQ…SNRR, NVAG…VDGK, and PKPVRTATSQSKIPKPVKHIPSDSNNLDP. Basic residues predominate over residues 415 to 426; it reads LIKRMSLRSKKS. Over residues 444 to 453 the composition is skewed to low complexity; that stretch reads STASAASTSA. Residues 455 to 473 are compositionally biased toward basic and acidic residues; the sequence is KTEKEKKMSAPRRSLDKLI. A phosphoserine mark is found at serine 477 and serine 493. The span at 477–487 shows a compositional bias: basic residues; it reads SLHRHHHHHHK. The span at 555–564 shows a compositional bias: polar residues; sequence EQTSITSGVP. Position 574 is a phosphoserine (serine 574). Basic and acidic residues predominate over residues 574–586; sequence STPEKIVEERSID. The segment covering 587-601 has biased composition (polar residues); sequence EVSQSNTPSSKQLPQ.

This sequence belongs to the UPF0590 family. Interacts (via FFAT-motif) with scs2 (via MSP domain); the interaction is direct and serves to restrict the localization of duc1 to areas of cell membrane-endoplasmic reticulum contact sites, and away from the cell division site.

The protein resides in the cell membrane. Functionally, promotes the proper distribution of phosphatidylinositol 4,5-bisphosphate (PtdIns(4,5)P2/PIP2) synthesis at the cell membrane. May bind phosphatidylinositol 4,5-bisphosphate (PtdIns(4,5)P2/PIP2) and is required for robust anchoring of the contractile ring to the cell membrane. The polypeptide is DUF1769 family protein duc1 (Schizosaccharomyces pombe (strain 972 / ATCC 24843) (Fission yeast)).